The sequence spans 352 residues: Glucose-6-phosphatase catalytic subunit 1 (352 aa).

The Lumenal segment spans residues 1 to 27 (MDLLHSWGVELAVYLQTRYGKYEGLFD). Residues 28 to 48 (LASTVADLHTTFFWLFPIWFH) traverse the membrane as a helical segment. The Cytoplasmic segment spans residues 49 to 56 (LRRDTALR). The helical transmembrane segment at 57–77 (LIWVAVIGDWLNLVLKWVLFG) threads the bilayer. Residues 78 to 113 (ERPYWWVHETKFYGAGPAPSLQQFPITCETGPGSPS) are Lumenal-facing. Substrate is bound at residue R79. A helical transmembrane segment spans residues 114–134 (GHAMGAAGVWYVMVTALLSIA). The active-site Proton donor is H115. At 135–141 (REKQCPP) the chain is on the cytoplasmic side. A helical transmembrane segment spans residues 142-162 (LLYRFLYIGLWMLMGLVELVV). Residues 163–166 (CISR) are Lumenal-facing. R166 serves as a coordination point for substrate. A helical membrane pass occupies residues 167–187 (VYMAAHFPHQVIAGIITGTLV). H172 (nucleophile) is an active-site residue. Over 188–205 (AEVVSKEKWIYSASLKKY) the chain is Cytoplasmic. Residues 206 to 226 (FLITLFLTSFAVGFYVLLKAL) form a helical membrane-spanning segment. At 227-256 (DVDLLWTMEKAQKWCIRPEWVHLDSAPFAS) the chain is on the lumenal side. Residues 257-276 (LLRNMGSLFGLGLGLHSPFY) traverse the membrane as a helical segment. Residues 277–289 (KTTKMRIMSAPLR) lie on the Cytoplasmic side of the membrane. Residues 290–310 (IGCIVISVSLLHLLDGWTFSP) form a helical membrane-spanning segment. Residues 311–324 (ENHMTFYALSFGKS) are Lumenal-facing. The chain crosses the membrane as a helical span at residues 325–345 (AVALLIPTTLVPWALSKIYPV). Topologically, residues 346-352 (KTEGKNL) are cytoplasmic. The Prevents secretion from ER signature appears at 349–352 (GKNL).

This sequence belongs to the glucose-6-phosphatase family.

It is found in the endoplasmic reticulum membrane. The enzyme catalyses D-glucose 6-phosphate + H2O = D-glucose + phosphate. Its pathway is carbohydrate biosynthesis; gluconeogenesis. In terms of biological role, hydrolyzes glucose-6-phosphate to glucose in the endoplasmic reticulum. Forms with the glucose-6-phosphate transporter (SLC37A4/G6PT) the complex responsible for glucose production in the terminal step of glycogenolysis and gluconeogenesis. Hence, it is the key enzyme in homeostatic regulation of blood glucose levels. This is Glucose-6-phosphatase catalytic subunit 1 (g6pc1) from Haplochromis nubilus (Blue Victoria mouthbrooder).